The sequence spans 181 residues: Adenylate kinase (181 aa).

10-15 serves as a coordination point for ATP; it reads GAGKGT. Residues 30–59 are NMP; that stretch reads STGDLFRANISQQTPLGREAQKYMDAGDLV. Residues Thr-31, Arg-36, 57-59, 85-88, and Gln-92 contribute to the AMP site; these read DLV and GYPR. Residues 126-132 are LID; sequence ARGRNDD. Arg-127 provides a ligand contact to ATP. Residues Arg-129 and Arg-140 each coordinate AMP. An ATP-binding site is contributed by Gly-166.

This sequence belongs to the adenylate kinase family. In terms of assembly, monomer.

The protein resides in the cytoplasm. The catalysed reaction is AMP + ATP = 2 ADP. Its pathway is purine metabolism; AMP biosynthesis via salvage pathway; AMP from ADP: step 1/1. Functionally, catalyzes the reversible transfer of the terminal phosphate group between ATP and AMP. Plays an important role in cellular energy homeostasis and in adenine nucleotide metabolism. The polypeptide is Adenylate kinase (Nocardia farcinica (strain IFM 10152)).